The sequence spans 533 residues: Peptide chain release factor 3 (533 aa).

In terms of domain architecture, tr-type G spans 9–284; the sequence is ARRRTFAIIS…ALCELSPPPL (276 aa). Residues 18–25, 95–99, and 149–152 each bind GTP; these read SHPDAGKT, DTPGH, and NKLD.

Belongs to the TRAFAC class translation factor GTPase superfamily. Classic translation factor GTPase family. PrfC subfamily.

The protein localises to the cytoplasm. Functionally, increases the formation of ribosomal termination complexes and stimulates activities of RF-1 and RF-2. It binds guanine nucleotides and has strong preference for UGA stop codons. It may interact directly with the ribosome. The stimulation of RF-1 and RF-2 is significantly reduced by GTP and GDP, but not by GMP. The protein is Peptide chain release factor 3 of Cupriavidus necator (strain ATCC 17699 / DSM 428 / KCTC 22496 / NCIMB 10442 / H16 / Stanier 337) (Ralstonia eutropha).